The following is a 652-amino-acid chain: Probable L-type lectin-domain containing receptor kinase S.5 (652 aa).

A signal peptide spans 1-20 (MRFSLAWKLLFLILTCKIET). Residues 21-266 (QVKCLKFDFP…EGLKIDGDGN (246 aa)) are Extracellular-facing. Residues 24–257 (CLKFDFPGFN…LNCVRSWSFE (234 aa)) are legume-lectin like. N-linked (GlcNAc...) asparagine glycosylation is found at N33, N91, N97, N100, N122, N139, N201, and N244. The helical transmembrane segment at 267–287 (MLWLWITIPIVFIVGIGAFLG) threads the bilayer. Residues 288–652 (ALYLRSRSKA…INSLTELTGR (365 aa)) lie on the Cytoplasmic side of the membrane. One can recognise a Protein kinase domain in the interval 330–622 (FGAENKLGQG…PDVPTERPAF (293 aa)). Residues 336–344 (LGQGGFGMV) and K357 contribute to the ATP site. D455 (proton acceptor) is an active-site residue.

This sequence in the C-terminal section; belongs to the protein kinase superfamily. Ser/Thr protein kinase family. It in the N-terminal section; belongs to the leguminous lectin family.

The protein resides in the cell membrane. The catalysed reaction is L-seryl-[protein] + ATP = O-phospho-L-seryl-[protein] + ADP + H(+). It catalyses the reaction L-threonyl-[protein] + ATP = O-phospho-L-threonyl-[protein] + ADP + H(+). The chain is Probable L-type lectin-domain containing receptor kinase S.5 (LECRKS5) from Arabidopsis thaliana (Mouse-ear cress).